Consider the following 449-residue polypeptide: METPAMFIKRCSRSIFLQVVIGLVIGVICGVGIPDLAVQMKPLGDGFIKLIKMLIALIVFCVVVNGISGAGDLKKVGRIGLKSVIYFEILTTIALVLGLVVAYSLGLGSGANIHLNELPAGDVALYTGRTQEIHGPVAFLMGLIPTSVFSAFAENDILQVLLFSVLFGSALNLVGEQASGVARLINEFSHIVFRIMGMIVRLAPLGVFGAVAFTTARYGVDSLSHLGALVLVFYATCLVFVMAVLGSVLRLSGVRMLPFLRYFREELLIVMGTASSDAVLPQVMRKLEHMGIRSSTVGLVIPTGYSFNLDGFSIYLTLAVVFIAHVTGTPLAMTDLITILLVSLVTSKGAHGIPGSALVILAATLTAVPAIPVAGLVLVLSVDWFMGIGRALTNLIGNCVATVTIARWENDIDMPRAQAILDGRLEAPAKADGEPLKRSAVAGEGKLHG.

Helical transmembrane passes span 16-38, 53-71, 84-106, 157-176, 197-219, 229-251, 311-333, and 358-380; these read FLQV…DLAV, MLIA…SGAG, VIYF…YSLG, ILQV…LVGE, GMIV…ARYG, LVLV…VLRL, GFSI…PLAM, and LVIL…VLVL.

Belongs to the dicarboxylate/amino acid:cation symporter (DAACS) (TC 2.A.23) family.

It localises to the cell inner membrane. Functionally, responsible for the transport of dicarboxylates such as succinate, fumarate, and malate from the periplasm across the membrane. The polypeptide is C4-dicarboxylate transport protein 1 (dctA1) (Pseudomonas aeruginosa (strain ATCC 15692 / DSM 22644 / CIP 104116 / JCM 14847 / LMG 12228 / 1C / PRS 101 / PAO1)).